Here is a 260-residue protein sequence, read N- to C-terminus: MRAPLWLRDLAGAWIFYSVLPAWPGLKPRFERIARFAPWIGLVLGGLQSFLWLVLIRADWPTSAVALLVIGLGAWLSGGLHLDGLMDTADGLAAGRERCLQAMDDSCVGASGVQALLVVVLLQIAALLRLGSLAPLALLIAAFWGRCAPLWAMARFFYLREGQAGSASFHRRYRQGWQEALPAFLVLLLALTVVPLLMIVGWPSQMVLMAGIGVGVLPAFLVPELLGRRLGGHSGDSYGASVVLVETITLLLLAVLLTAG.

Helical transmembrane passes span 3–23, 36–56, 60–80, 108–128, 133–153, 180–200, 206–226, and 239–259; these read APLWLRDLAGAWIFYSVLPAW, FAPWIGLVLGGLQSFLWLVLI, WPTSAVALLVIGLGAWLSGGL, VGASGVQALLVVVLLQIAALL, LAPLALLIAAFWGRCAPLWAM, ALPAFLVLLLALTVVPLLMIV, MVLMAGIGVGVLPAFLVPELL, and GASVVLVETITLLLLAVLLTA.

Belongs to the CobS family. It depends on Mg(2+) as a cofactor.

The protein resides in the cell inner membrane. It carries out the reaction alpha-ribazole + adenosylcob(III)inamide-GDP = adenosylcob(III)alamin + GMP + H(+). It catalyses the reaction alpha-ribazole 5'-phosphate + adenosylcob(III)inamide-GDP = adenosylcob(III)alamin 5'-phosphate + GMP + H(+). The protein operates within cofactor biosynthesis; adenosylcobalamin biosynthesis; adenosylcobalamin from cob(II)yrinate a,c-diamide: step 7/7. Functionally, joins adenosylcobinamide-GDP and alpha-ribazole to generate adenosylcobalamin (Ado-cobalamin). Also synthesizes adenosylcobalamin 5'-phosphate from adenosylcobinamide-GDP and alpha-ribazole 5'-phosphate. In Prochlorococcus marinus (strain MIT 9303), this protein is Adenosylcobinamide-GDP ribazoletransferase.